A 748-amino-acid polypeptide reads, in one-letter code: Acyl-coenzyme A oxidase (748 aa).

Belongs to the acyl-CoA oxidase family. Requires FAD as cofactor.

It is found in the peroxisome. The catalysed reaction is a 2,3-saturated acyl-CoA + O2 = a (2E)-enoyl-CoA + H2O2. Its pathway is lipid metabolism; peroxisomal fatty acid beta-oxidation. The polypeptide is Acyl-coenzyme A oxidase (POX1) (Candida glabrata (strain ATCC 2001 / BCRC 20586 / JCM 3761 / NBRC 0622 / NRRL Y-65 / CBS 138) (Yeast)).